Here is a 459-residue protein sequence, read N- to C-terminus: Phosphomethylpyrimidine synthase (459 aa).

Substrate is bound by residues Asn-80, Met-109, Tyr-139, His-175, 195-197, 236-239, and Glu-275; these read SRG and DSLR. His-279 provides a ligand contact to Zn(2+). Tyr-302 is a substrate binding site. His-343 contributes to the Zn(2+) binding site. Positions 423, 426, and 431 each coordinate [4Fe-4S] cluster.

It belongs to the ThiC family. The cofactor is [4Fe-4S] cluster.

It carries out the reaction 5-amino-1-(5-phospho-beta-D-ribosyl)imidazole + S-adenosyl-L-methionine = 4-amino-2-methyl-5-(phosphooxymethyl)pyrimidine + CO + 5'-deoxyadenosine + formate + L-methionine + 3 H(+). It functions in the pathway cofactor biosynthesis; thiamine diphosphate biosynthesis. In terms of biological role, catalyzes the synthesis of the hydroxymethylpyrimidine phosphate (HMP-P) moiety of thiamine from aminoimidazole ribotide (AIR) in a radical S-adenosyl-L-methionine (SAM)-dependent reaction. The sequence is that of Phosphomethylpyrimidine synthase from Prochlorococcus marinus (strain MIT 9303).